The following is a 417-amino-acid chain: GPI mannosyltransferase 2 (417 aa).

Transmembrane regions (helical) follow at residues 10-30 (FLII…LVWL), 104-124 (IVLK…WIVY), 142-162 (LALT…LISV), 167-187 (IAFT…SFDV), 206-226 (FCFA…LFYV), 239-259 (ITSI…FVYF), 312-332 (IPNF…ITYF), 344-364 (YIWI…VQII), and 394-414 (YYVM…ACFL).

Belongs to the PIGV family.

The protein localises to the endoplasmic reticulum membrane. It functions in the pathway glycolipid biosynthesis; glycosylphosphatidylinositol-anchor biosynthesis. In terms of biological role, mannosyltransferase involved in glycosylphosphatidylinositol-anchor biosynthesis. Transfers the second mannose to the glycosylphosphatidylinositol during GPI precursor assembly. The sequence is that of GPI mannosyltransferase 2 (GPI18) from Kluyveromyces lactis (strain ATCC 8585 / CBS 2359 / DSM 70799 / NBRC 1267 / NRRL Y-1140 / WM37) (Yeast).